The chain runs to 263 residues: MSEPSYDHQVDRSHMQVSDEIAIQISQMNKWYGQFHVLRDINLTVHRGERIVIAGPSGSGKSTMIRCINRLEEHQSGKIIVDGIELTSDLKNIDKVRSEVGMVFQHFNLFPHLTILENLTLAPIWVRKVPKREAEETAMYYLEKVKIPEQAQKYPGQLSGGQQQRVAIARSLCMKPKIMLFDEPTSALDPEMIKEVLDTMIQLAEEGMTMLCVAHEMGFAQAVANRVIFMADGQIVEQNNPHDFFRNPQSERTKQFLSQILGH.

In terms of domain architecture, ABC transporter spans 23–257 (IQISQMNKWY…PQSERTKQFL (235 aa)). 55-62 (GPSGSGKS) provides a ligand contact to ATP.

It belongs to the ABC transporter superfamily. As to quaternary structure, bztB and BztC form a heterodimer which can form a membrane complex with a homodimer of BztD.

The protein resides in the cell membrane. Its function is as follows. Part of a binding-protein-dependent transport system for glutamate, glutamine, aspartate, asparagine. Probably responsible for energy coupling to the transport system. The chain is Glutamate/glutamine/aspartate/asparagine transport ATP-binding protein BztD (bztD) from Rhodobacter capsulatus (strain ATCC BAA-309 / NBRC 16581 / SB1003).